Consider the following 455-residue polypeptide: Argininosuccinate lyase (455 aa).

It belongs to the lyase 1 family. Argininosuccinate lyase subfamily.

Its subcellular location is the cytoplasm. The catalysed reaction is 2-(N(omega)-L-arginino)succinate = fumarate + L-arginine. Its pathway is amino-acid biosynthesis; L-arginine biosynthesis; L-arginine from L-ornithine and carbamoyl phosphate: step 3/3. The sequence is that of Argininosuccinate lyase from Shewanella baltica (strain OS195).